Reading from the N-terminus, the 59-residue chain is Insulin (59 aa).

3 disulfides stabilise this stretch: Cys7-Cys45, Cys19-Cys58, and Cys44-Cys49.

Belongs to the insulin family. Heterodimer of a B chain and an A chain linked by two disulfide bonds.

It localises to the secreted. Insulin decreases blood glucose concentration. It increases cell permeability to monosaccharides, amino acids and fatty acids. It accelerates glycolysis, the pentose phosphate cycle, and glycogen synthesis in liver. The polypeptide is Insulin (ins) (Chimaera monstrosa (Rabbit fish)).